A 793-amino-acid polypeptide reads, in one-letter code: Potassium transporter 18 (793 aa).

Residues 1–53 (METRTNEYSRKGAMWELERNLDQPMDAEAGRLRNMYREKTYPTILLLRLAFQS) are Cytoplasmic-facing. Residues 54 to 74 (LGVVFGDLGTSPLYVFYNIFP) traverse the membrane as a helical segment. Topologically, residues 75–86 (HGIEDTEQVIGA) are extracellular. The helical transmembrane segment at 87–107 (LSLIIYSLTLIPLVKYVFIVL) threads the bilayer. The Cytoplasmic portion of the chain corresponds to 108–172 (RANDNGQGGT…WLEGHQFRKN (65 aa)). Residues 173-193 (LILILVLFGTCMAVGDGILTP) form a helical membrane-spanning segment. At 194–214 (AISVLSATGGIQVEEGRMRND) the chain is on the extracellular side. The chain crosses the membrane as a helical span at residues 215 to 235 (VVVIISVLILIGLFSMQHYGT). Residues 236 to 237 (DK) are Cytoplasmic-facing. A helical transmembrane segment spans residues 238–258 (VSWLFAPIVFVWFILIGILGA). The Extracellular portion of the chain corresponds to 259-287 (VNICKYDHSVLKAFNPVYVYRYFKRGKTS). Residues 288–308 (WTSLGGIMLSITGTEALFADL) form a helical membrane-spanning segment. Position 309 (serine 309) is a topological domain, cytoplasmic. A helical membrane pass occupies residues 310 to 330 (YFPVQAIQIAFTVVVFPCLLL). The Extracellular segment spans residues 331–351 (QYTGQAAFIAANTNQVSHAFY). The helical transmembrane segment at 352–372 (ISLPAPILWPAFAVATAAAIV) threads the bilayer. Residues 373 to 409 (ASQATISATYSIIKQALALGCFPRVKIIHTSKKYLGQ) are Cytoplasmic-facing. A helical membrane pass occupies residues 410–430 (IYSPDINWILMVFCIAVTAGF). Topologically, residues 431-442 (KNQSQIANAYGT) are extracellular. N-linked (GlcNAc...) asparagine glycosylation is present at asparagine 432. A helical transmembrane segment spans residues 443–463 (AVIMVMLVTTFLMIPIMLLVW). The Cytoplasmic portion of the chain corresponds to 464–468 (RSHWT). A helical membrane pass occupies residues 469–489 (LVVAFTVLSLLVEIPYFSAVV). The Extracellular portion of the chain corresponds to 490–494 (RKIDQ). The helical transmembrane segment at 495–515 (GGWVPLVFAAGFMIIMYVWHY) threads the bilayer. The Cytoplasmic segment spans residues 516 to 793 (GTLKRYEFEM…MLNVGQVFYV (278 aa)).

It belongs to the HAK/KUP transporter (TC 2.A.72.3) family.

Its subcellular location is the membrane. High-affinity potassium transporter. The polypeptide is Potassium transporter 18 (HAK18) (Oryza sativa subsp. japonica (Rice)).